The chain runs to 258 residues: Imidazole glycerol phosphate synthase subunit HisF (258 aa).

Catalysis depends on residues aspartate 11 and aspartate 130.

The protein belongs to the HisA/HisF family. In terms of assembly, heterodimer of HisH and HisF.

The protein resides in the cytoplasm. It catalyses the reaction 5-[(5-phospho-1-deoxy-D-ribulos-1-ylimino)methylamino]-1-(5-phospho-beta-D-ribosyl)imidazole-4-carboxamide + L-glutamine = D-erythro-1-(imidazol-4-yl)glycerol 3-phosphate + 5-amino-1-(5-phospho-beta-D-ribosyl)imidazole-4-carboxamide + L-glutamate + H(+). The protein operates within amino-acid biosynthesis; L-histidine biosynthesis; L-histidine from 5-phospho-alpha-D-ribose 1-diphosphate: step 5/9. In terms of biological role, IGPS catalyzes the conversion of PRFAR and glutamine to IGP, AICAR and glutamate. The HisF subunit catalyzes the cyclization activity that produces IGP and AICAR from PRFAR using the ammonia provided by the HisH subunit. This Escherichia coli (strain ATCC 8739 / DSM 1576 / NBRC 3972 / NCIMB 8545 / WDCM 00012 / Crooks) protein is Imidazole glycerol phosphate synthase subunit HisF.